We begin with the raw amino-acid sequence, 215 residues long: Nascent polypeptide-associated complex subunit alpha (215 aa).

The segment at 1 to 81 (MPGEATETVP…SEKKARKAMS (81 aa)) is disordered. Residues 9 to 21 (VPVTEQEMQQPQV) are compositionally biased toward polar residues. The segment covering 29–42 (SDSDDSVPELEEQD) has biased composition (acidic residues). Residues 43–57 (SAQTQTQQAQLAAAA) are compositionally biased toward low complexity. An NAC-A/B domain is found at 70–135 (SRSEKKARKA…AKIEDLSQQA (66 aa)). The region spanning 176–213 (VEVKDIELVMSQANVSRAKAVRALKNNNNDIVNAIMEL) is the UBA domain.

The protein belongs to the NAC-alpha family.

Its function is as follows. May promote appropriate targeting of ribosome-nascent polypeptide complexes. The sequence is that of Nascent polypeptide-associated complex subunit alpha (naca) from Oreochromis niloticus (Nile tilapia).